Consider the following 224-residue polypeptide: Holliday junction branch migration complex subunit RuvA (224 aa).

Positions 1 to 64 (MIGKVAGILD…EDLLQLFGFP (64 aa)) are domain I. Residues 65 to 143 (TMIEKEWHRL…ALMAMGGGTA (79 aa)) form a domain II region. Residues 141-185 (GTAALAPSEPPEPQPGTSSGSRRKTRAPEPPRPSHTADALSALAN) are disordered. A flexible linker region spans residues 144 to 170 (ALAPSEPPEPQPGTSSGSRRKTRAPEP). Residues 171 to 224 (PRPSHTADALSALANLGYQPTDAAQAVAQAAGESPDADTAALIRAALKLLAPKS) are domain III.

This sequence belongs to the RuvA family. Homotetramer. Forms an RuvA(8)-RuvB(12)-Holliday junction (HJ) complex. HJ DNA is sandwiched between 2 RuvA tetramers; dsDNA enters through RuvA and exits via RuvB. An RuvB hexamer assembles on each DNA strand where it exits the tetramer. Each RuvB hexamer is contacted by two RuvA subunits (via domain III) on 2 adjacent RuvB subunits; this complex drives branch migration. In the full resolvosome a probable DNA-RuvA(4)-RuvB(12)-RuvC(2) complex forms which resolves the HJ.

The protein localises to the cytoplasm. The RuvA-RuvB-RuvC complex processes Holliday junction (HJ) DNA during genetic recombination and DNA repair, while the RuvA-RuvB complex plays an important role in the rescue of blocked DNA replication forks via replication fork reversal (RFR). RuvA specifically binds to HJ cruciform DNA, conferring on it an open structure. The RuvB hexamer acts as an ATP-dependent pump, pulling dsDNA into and through the RuvAB complex. HJ branch migration allows RuvC to scan DNA until it finds its consensus sequence, where it cleaves and resolves the cruciform DNA. The chain is Holliday junction branch migration complex subunit RuvA from Cereibacter sphaeroides (strain KD131 / KCTC 12085) (Rhodobacter sphaeroides).